A 216-amino-acid chain; its full sequence is Orotate phosphoribosyltransferase (216 aa).

Residue Lys30 coordinates 5-phospho-alpha-D-ribose 1-diphosphate. 38–39 (FF) lines the orotate pocket. 5-phospho-alpha-D-ribose 1-diphosphate contacts are provided by residues 75-76 (YK), Arg102, Lys103, Lys106, His108, and 128-136 (DDVITAGTA). Orotate-binding residues include Thr132 and Arg160.

Belongs to the purine/pyrimidine phosphoribosyltransferase family. PyrE subfamily. As to quaternary structure, homodimer. Mg(2+) serves as cofactor.

It catalyses the reaction orotidine 5'-phosphate + diphosphate = orotate + 5-phospho-alpha-D-ribose 1-diphosphate. It participates in pyrimidine metabolism; UMP biosynthesis via de novo pathway; UMP from orotate: step 1/2. Its function is as follows. Catalyzes the transfer of a ribosyl phosphate group from 5-phosphoribose 1-diphosphate to orotate, leading to the formation of orotidine monophosphate (OMP). In Acinetobacter baumannii (strain ATCC 17978 / DSM 105126 / CIP 53.77 / LMG 1025 / NCDC KC755 / 5377), this protein is Orotate phosphoribosyltransferase.